The primary structure comprises 503 residues: Lysine--tRNA ligase (503 aa).

Residues E414 and E421 each coordinate Mg(2+).

Belongs to the class-II aminoacyl-tRNA synthetase family. In terms of assembly, homodimer. It depends on Mg(2+) as a cofactor.

The protein resides in the cytoplasm. The enzyme catalyses tRNA(Lys) + L-lysine + ATP = L-lysyl-tRNA(Lys) + AMP + diphosphate. This chain is Lysine--tRNA ligase, found in Laribacter hongkongensis (strain HLHK9).